We begin with the raw amino-acid sequence, 356 residues long: Probable neutral protease 2 homolog TRV_06370 (356 aa).

The N-terminal stretch at 1-17 (MQFTALLAALGAPLALA) is a signal peptide. Residues 18–183 (ASIPAAAHNH…DDSTGVIDKR (166 aa)) constitute a propeptide that is removed on maturation. 2 cysteine pairs are disulfide-bonded: cysteine 191-cysteine 262 and cysteine 269-cysteine 287. Histidine 311 serves as a coordination point for Zn(2+). Glutamate 312 is an active-site residue. Zn(2+) is bound by residues histidine 315 and aspartate 326.

The protein belongs to the peptidase M35 family. Zn(2+) is required as a cofactor.

The protein resides in the secreted. The enzyme catalyses Preferential cleavage of bonds with hydrophobic residues in P1'. Also 3-Asn-|-Gln-4 and 8-Gly-|-Ser-9 bonds in insulin B chain.. In terms of biological role, probable secreted metalloprotease that shows high activities on basic nuclear substrates such as histone and protamine. May be involved in virulence. In Trichophyton verrucosum (strain HKI 0517), this protein is Probable neutral protease 2 homolog TRV_06370.